A 1218-amino-acid chain; its full sequence is NACHT, LRR and PYD domains-containing protein 1a allele 1 (1218 aa).

Residues 1 to 61 are disordered; sequence MEESQSKQES…SLPGWSSTSN (61 aa). Polar residues predominate over residues 7–29; sequence KQESNTRVAQHGSQQDVDPTFQT. The NACHT domain maps to 175–484; that stretch reads QLVIIEGAAG…EFFAAMSYIL (310 aa). 181–188 provides a ligand contact to ATP; it reads GAAGIGKS. LRR repeat units follow at residues 343-364, 673-693, and 730-750; these read KERN…LTLC, NLEE…RSLC, and RLAE…RQLC. Over residues 799–815 the composition is skewed to polar residues; the sequence is TMPTENTDGEESLTSSK. The tract at residues 799–842 is disordered; sequence TMPTENTDGEESLTSSKQQQQQSGDKHMEPLGTDDDFWGPSGPV. A ZU5 region spans residues 835 to 968; it reads FWGPSGPVST…HFAVLENPSF (134 aa). Positions 835–1118 constitute an FIIND domain; the sequence is FWGPSGPVST…LRPALPRMAS (284 aa). The segment at 969-1118 is UPA; sequence SPMGVLLRMI…LRPALPRMAS (150 aa). The CARD domain maps to 1122–1211; sequence DAPALLHFVD…HLIMDLLEKS (90 aa).

This sequence belongs to the NLRP family. Interacts (via LRR repeats) with BCL2 and BCL2L1 (via the loop between motifs BH4 and BH3). Interacts with NOD2; this interaction is enhanced in the presence of muramyl dipeptide (MDP) and increases IL1B release. Interacts with EIF2AK2/PKR; this interaction requires EIF2AK2 activity, is accompanied by EIF2AK2 autophosphorylation and promotes inflammasome assembly in response to danger-associated signals. Interacts with MEFV; this interaction targets Nlrp1a to degradation by autophagy, hence preventing excessive IL1B- and IL18-mediated inflammation. Interacts with DPP9; leading to inhibit activation of the inflammasome. DPP9 acts via formation of a ternary complex, composed of a DPP9 homodimer, one full-length NLRP1 protein, and one cleaved C-terminus of Nlrp1a (NACHT, LRR and PYD domains-containing protein 1a, C-terminus). Interacts with DPP8; leading to inhibit activation of the inflammasome, probably via formation of a ternary complex with DPP8. In terms of assembly, interacts with the C-terminal part of Nlrp1a (NACHT, LRR and PYD domains-containing protein 1a, C-terminus) in absence of pathogens and other damage-associated signals. As to quaternary structure, interacts with the N-terminal part of Nlrp1a (NACHT, LRR and PYD domains-containing protein 1a, N-terminus) in absence of pathogens and other damage-associated signals. Homomultimer; forms the Nlrp1a inflammasome polymeric complex, a filament composed of homopolymers of this form in response to pathogens and other damage-associated signals. The Nlrp1a inflammasome polymeric complex directly recruits pro-caspase-1 (proCASP1) independently of PYCARD/ASC. Interacts (via CARD domain) with CASP1 (via CARD domain); leading to CASP1 activation. In terms of processing, autocatalytically cleaved. Autocatalytic cleavage in FIIND region occurs constitutively, prior to activation signals, and is required for inflammasome activity (IL1B release), possibly by facilitating CASP1 binding. Both N- and C-terminal parts remain associated non-covalently. Post-translationally, (Microbial infection) Cleavage by B.anthracis lethal toxin (LT) endopeptidase promotes ubiquitination and degradation of the N-terminal part, releasing the cleaved C-terminal part of the protein (NACHT, LRR and PYD domains-containing protein 1a, C-terminus), which polymerizes and forms the Nlrp1a inflammasome. Ubiquitinated in response to pathogen-associated signals, leading to its degradation by the proteasome and subsequent release of the cleaved C-terminal part of the protein (NACHT, LRR and PYD domains-containing protein 1a, C-terminus), which polymerizes and forms the Nlrp1a inflammasome.

The protein localises to the cytoplasm. Its subcellular location is the cytosol. The protein resides in the nucleus. It is found in the inflammasome. Activated by cleavage by B.anthracis lethal toxin (LT) endopeptidase. Cleavage by LT promotes ubiquitination and degradation of the N-terminal part, releasing the cleaved C-terminal part of the protein (NACHT, LRR and PYD domains-containing protein 1a, C-terminus), which polymerizes and forms the Nlrp1a inflammasome. Nlrp1a inflammasome is inhibited by DPP8 and DPP9, which sequester the C-terminal fragment of Nlrp1a (NACHT, LRR and PYD domains-containing protein 1a, C-terminus) in a ternary complex, thereby preventing Nlrp1a oligomerization and activation. Nlrp1a inflammasome is weakly activated by Val-boroPro (Talabostat, PT-100), an inhibitor of dipeptidyl peptidases DPP8 and DPP9. Val-boroPro relieves inhibition of DPP8 and/or DPP9 by promoting disruption of the ternary complex, releasing its C-terminal part from autoinhibition. Weakly activated by Toxoplasma gondii. Acts as the sensor component of the Nlrp1a inflammasome, which mediates inflammasome activation in response to various pathogen-associated signals, leading to subsequent pyroptosis. Inflammasomes are supramolecular complexes that assemble in the cytosol in response to pathogens and other damage-associated signals and play critical roles in innate immunity and inflammation. Acts as a recognition receptor (PRR): recognizes specific pathogens and other damage-associated signals, such as B.anthracis lethal toxin (LT) or Val-boroPro inhibitor, and mediates the formation of the inflammasome polymeric complex. In response to pathogen-associated signals, the N-terminal part of Nlrp1a is degraded by the proteasome, releasing the cleaved C-terminal part of the protein (NACHT, LRR and PYD domains-containing protein 1a, C-terminus), which polymerizes to initiate the formation of the inflammasome complex: the inflammasome directly recruits pro-caspase-1 (proCASP1) independently of PYCARD/ASC and promotes caspase-1 (CASP1) activation, which subsequently cleaves and activates inflammatory cytokines IL1B and IL18 and gasdermin-D (GSDMD), leading to pyroptosis. In the absence of GSDMD expression, the Nlrp1a inflammasome is able to recruit and activate CASP8, leading to activation of gasdermin-E (GSDME). Functionally, constitutes the precursor of the Nlrp1a inflammasome, which mediates autoproteolytic processing within the FIIND domain to generate the N-terminal and C-terminal parts, which are associated non-covalently in absence of pathogens and other damage-associated signals. In terms of biological role, regulatory part that prevents formation of the Nlrp1a inflammasome: in absence of pathogens and other damage-associated signals, interacts with the C-terminal part of Nlrp1a (NACHT, LRR and PYD domains-containing protein 1a, C-terminus), preventing activation of the Nlrp1a inflammasome. In response to pathogen-associated signals, this part is ubiquitinated by the N-end rule pathway and degraded by the proteasome, releasing the cleaved C-terminal part of the protein, which polymerizes and forms the Nlrp1a inflammasome. Its function is as follows. Constitutes the active part of the Nlrp1a inflammasome. In absence of pathogens and other damage-associated signals, interacts with the N-terminal part of Nlrp1a (NACHT, LRR and PYD domains-containing protein 1a, N-terminus), preventing activation of the Nlrp1a inflammasome. In response to pathogen-associated signals, the N-terminal part of Nlrp1a is degraded by the proteasome, releasing this form, which polymerizes to form the Nlrp1a inflammasome complex: the Nlrp1a inflammasome complex then directly recruits pro-caspase-1 (proCASP1) and promotes caspase-1 (CASP1) activation, leading to gasdermin-D (GSDMD) cleavage and subsequent pyroptosis. This is NACHT, LRR and PYD domains-containing protein 1a allele 1 from Rattus norvegicus (Rat).